Here is a 211-residue protein sequence, read N- to C-terminus: Protein-methionine-sulfoxide reductase heme-binding subunit MsrQ (211 aa).

4 consecutive transmembrane segments (helical) span residues 10 to 30, 82 to 102, 116 to 136, and 153 to 173; these read WLKV…VWAI, LWCF…ELGV, PYLT…FTST, and FVYL…KIIS.

The protein belongs to the MsrQ family. In terms of assembly, heterodimer of a catalytic subunit (MsrP) and a heme-binding subunit (MsrQ). Requires FMN as cofactor. It depends on heme b as a cofactor.

It localises to the cell inner membrane. Its function is as follows. Part of the MsrPQ system that repairs oxidized periplasmic proteins containing methionine sulfoxide residues (Met-O), using respiratory chain electrons. Thus protects these proteins from oxidative-stress damage caused by reactive species of oxygen and chlorine generated by the host defense mechanisms. MsrPQ is essential for the maintenance of envelope integrity under bleach stress, rescuing a wide series of structurally unrelated periplasmic proteins from methionine oxidation, including the primary periplasmic chaperone SurA and the lipoprotein Pal. MsrQ provides electrons for reduction to the reductase catalytic subunit MsrP, using the quinone pool of the respiratory chain. This chain is Protein-methionine-sulfoxide reductase heme-binding subunit MsrQ, found in Escherichia coli O157:H7.